The primary structure comprises 245 residues: Carboxy-S-adenosyl-L-methionine synthase (245 aa).

Residues Y42, 67–69 (GCS), 92–93 (DN), 120–121 (DI), N135, and R202 each bind S-adenosyl-L-methionine.

Belongs to the class I-like SAM-binding methyltransferase superfamily. Cx-SAM synthase family. As to quaternary structure, homodimer.

It catalyses the reaction prephenate + S-adenosyl-L-methionine = carboxy-S-adenosyl-L-methionine + 3-phenylpyruvate + H2O. Catalyzes the conversion of S-adenosyl-L-methionine (SAM) to carboxy-S-adenosyl-L-methionine (Cx-SAM). This Vibrio vulnificus (strain CMCP6) protein is Carboxy-S-adenosyl-L-methionine synthase.